The sequence spans 1159 residues: Reverse gyrase 2 (1159 aa).

An RG N-terminal-type zinc finger spans residues 1–40 (MALELIERGCPNCGGVISSDRLEKGLPCSKCLPKPTEEKV). C10, C13, C28, and C31 together coordinate Zn(2+). Residues Q82 and 99–106 (APTGVGKT) contribute to the ATP site. The Helicase ATP-binding domain occupies 86 to 275 (AKRVFMNQSF…LFRNLLGFDV (190 aa)). The DEAD box signature appears at 196–199 (DDID). Residues 583-1159 (DLFKTTLVIV…LLKEEKAFKK (577 aa)) are topoisomerase I. One can recognise a Toprim domain in the interval 587-743 (TTLVIVESPN…NIKRAEFHEV (157 aa)). Positions 593 and 712 each coordinate Mg(2+). Residues 759-1152 (DLNLVKAQLV…EVHRIKVLLK (394 aa)) form the Topo IA-type catalytic domain. Catalysis depends on Y902, which acts as the O-(5'-phospho-DNA)-tyrosine intermediate.

It in the N-terminal section; belongs to the DEAD box helicase family. DDVD subfamily. This sequence in the C-terminal section; belongs to the type IA topoisomerase family. In terms of assembly, monomer. It depends on Zn(2+) as a cofactor. Mg(2+) is required as a cofactor.

The protein localises to the cytoplasm. It catalyses the reaction ATP + H2O = ADP + phosphate + H(+). In terms of biological role, modifies the topological state of DNA by introducing positive supercoils in an ATP-dependent process, increasing the linking number in steps of +1. Binds to single-stranded DNA, transiently cleaves and then rejoins the ends, introducing a positive supercoil in the process. The scissile phosphodiester is attacked by the catalytic tyrosine of the enzyme, resulting in the formation of a DNA-(5'-phosphotyrosyl)-enzyme intermediate. Probably involved in rewinding DNA strands in regions of the chromosome that have opened up to allow replication, transcription, DNA repair and/or for DNA protection. The chain is Reverse gyrase 2 from Aquifex aeolicus (strain VF5).